Consider the following 168-residue polypeptide: Putative adenylate kinase (168 aa).

5 residues coordinate ATP: Gly-10, Gly-12, Lys-13, Thr-14, and Thr-15. The NMP stretch occupies residues 28 to 51; the sequence is HLNERIREEGLDAGRDEERDSLVA. The segment at 97–107 is LID; the sequence is DRGEPAAKAAE. Arg-98 contributes to the ATP binding site.

Belongs to the adenylate kinase family. AK6 subfamily. Interacts with uS11. Not a structural component of 40S pre-ribosomes, but transiently interacts with them by binding to uS11.

It carries out the reaction AMP + ATP = 2 ADP. The enzyme catalyses ATP + H2O = ADP + phosphate + H(+). In terms of biological role, broad-specificity nucleoside monophosphate (NMP) kinase that catalyzes the reversible transfer of the terminal phosphate group between nucleoside triphosphates and monophosphates. Also has ATPase activity. Involved in the late maturation steps of the 30S ribosomal particles, specifically 16S rRNA maturation. While NMP activity is not required for ribosome maturation, ATPase activity is. Associates transiently with small ribosomal subunit protein uS11. ATP hydrolysis breaks the interaction with uS11. May temporarily remove uS11 from the ribosome to enable a conformational change of the ribosomal RNA that is needed for the final maturation step of the small ribosomal subunit. The chain is Putative adenylate kinase from Natronomonas pharaonis (strain ATCC 35678 / DSM 2160 / CIP 103997 / JCM 8858 / NBRC 14720 / NCIMB 2260 / Gabara) (Halobacterium pharaonis).